A 358-amino-acid chain; its full sequence is Peptide chain release factor 1 (358 aa).

The residue at position 233 (glutamine 233) is an N5-methylglutamine.

The protein belongs to the prokaryotic/mitochondrial release factor family. Methylated by PrmC. Methylation increases the termination efficiency of RF1.

The protein localises to the cytoplasm. Functionally, peptide chain release factor 1 directs the termination of translation in response to the peptide chain termination codons UAG and UAA. This is Peptide chain release factor 1 from Flavobacterium johnsoniae (strain ATCC 17061 / DSM 2064 / JCM 8514 / BCRC 14874 / CCUG 350202 / NBRC 14942 / NCIMB 11054 / UW101) (Cytophaga johnsonae).